We begin with the raw amino-acid sequence, 1014 residues long: MPARAPPRRLPRLLLLRLLSLHLLLLTLRARCLSAEPGQGAQTWARFARPPVPEASGLLHDTFPDGFLWAVGSAAYQTEGGWRQHGKGASIWDTFTHHPRAIPEDSPIVMAPSGAPLPPLPSTGDVASDSYNNVYRDTEGLRELGVTHYRFSISWARVLPNGTAGTPNREGLRYYRRLLERLRELGVQPVVTLYHWDLPQRLQDTYGGWANRALADHFRDYAELCFRHFGGQVKYWITIDNPYVVAWHGYATGRLAPGVRGSSRLGYLVAHNLLLAHAKVWRLYNTSFRPTQGGRVSIALGSHWITPRRMTDYHIRECQKSLDFVLGWFAKPIFIDGDYPKSMKNNLSSLLPDFTESEKRFIRGTADFFALSFGPTLSFQLLDPSMKFRQLESPSLRQLLSWIDLEYNHPQIFIVENGWFVSGTTRRDDAKYMYYLKKFIMESLKAIRLDGVDVIGYTAWSLMDGFEWHRGYSIRRGLFYVDFLSQDKELLPKSSALFYQKLIENNGFPPLPENQPLEGTFPCDFAWGVVDNYIQVDPTLSQFTDPNVYLWDVHHSKRLIKVDGVVAKKRKPYCVDFSAIRPQITLLREMRVTHFRFSLDWALILPLGNQTQVNRTVLHFYRCMVSELVHANITPVVALWQPATPHQGLPHALAKHGAWENPHTALAFADYANLCFEELGHWVKFWITINEPNSRNMTYRAGHHLLKAHALAWHLYDDKFRAAQKGKISIALQVDWIEPACPFSQKDKEVAERVLEFDVGWLAEPIFGSGDYPHVMREWLNQKNNFLLPYFTEDEKKLIRGSFDFLALSHYTTILVDWEKEDPIKYNDYLEVQEMTDITWLNSPNQVAVVPWGLRKALNWLRFKYGDLPMFVTANGIDDDPHAEQDSLRMYYIKNYVNEALKAYVLDGINLCGYFAYSLSDRSVPKSGFYRYAANQFEPKPSIKHYRKIIDNNGFLGSGTLGRFCPEEYTVCTGCGFFQTRKSLLAFISFLVFAFVTSLALIYYYSKKGRRRYK.

Positions 1-34 are cleaved as a signal peptide; it reads MPARAPPRRLPRLLLLRLLSLHLLLLTLRARCLS. Residues 35 to 983 are Extracellular-facing; it reads AEPGQGAQTW…GCGFFQTRKS (949 aa). Glycosyl hydrolase-1 regions lie at residues 59–508 and 517–955; these read LHDT…NNGF and LEGT…NNGF. Residues Asn161, Asn285, Asn346, Asn609, Asn614, and Asn696 are each glycosylated (N-linked (GlcNAc...) asparagine). Residues 984–1004 form a helical membrane-spanning segment; it reads LLAFISFLVFAFVTSLALIYY. The Cytoplasmic portion of the chain corresponds to 1005–1014; sequence YSKKGRRRYK.

Belongs to the glycosyl hydrolase 1 family. Klotho subfamily. Homodimer. Interacts with FGF23 and FGFR1. Post-translationally, N-glycosylated. As to expression, present in cortical renal tubules and the parathyroid (at protein level). Strongly expressed in kidney. Expressed at low levels in brain, lung, intestine and ovaries.

It is found in the cell membrane. The protein resides in the apical cell membrane. It localises to the secreted. The enzyme catalyses a beta-D-glucuronoside + H2O = D-glucuronate + an alcohol. In terms of biological role, may have weak glycosidase activity towards glucuronylated steroids. However, it lacks essential active site Glu residues at positions 241 and 874, suggesting it may be inactive as a glycosidase in vivo. May be involved in the regulation of calcium and phosphorus homeostasis by inhibiting the synthesis of active vitamin D. Essential factor for the specific interaction between FGF23 and FGFR1. The Klotho peptide generated by cleavage of the membrane-bound isoform may be an anti-aging circulating hormone which would extend life span by inhibiting insulin/IGF1 signaling. This chain is Klotho (Kl), found in Rattus norvegicus (Rat).